The sequence spans 210 residues: Rho-related GTP-binding protein RhoD (210 aa).

Residue 24-31 (GDGGCGKT) coordinates GTP. An Effector region motif is present at residues 46–54 (YSPTVFERY). GTP-binding positions include 71–75 (DTAGQ) and 129–132 (CKID). Cys207 is subject to Cysteine methyl ester. Residue Cys207 is the site of S-geranylgeranyl cysteine attachment. The propeptide at 208 to 210 (LAT) is removed in mature form.

The protein belongs to the small GTPase superfamily. Rho family. As to quaternary structure, interacts with PAK5. Interacts (in GTP-bound form) with DAPK3, FILIP1 and WHAMM. Interacts (independent of GTP-loaded status) with ANKFY1. As to expression, widely expressed.

The protein resides in the cell membrane. It localises to the early endosome. In terms of biological role, involved in endosome dynamics. May coordinate membrane transport with the function of the cytoskeleton. Involved in the internalization and trafficking of activated tyrosine kinase receptors such as PDGFRB. Participates in the reorganization of actin cytoskeleton; the function seems to involve WHAMM and includes regulation of filopodia formation and actin filament bundling. Can modulate the effect of DAPK3 in reorganization of actin cytoskeleton and focal adhesion dissolution. This Mus musculus (Mouse) protein is Rho-related GTP-binding protein RhoD (Rhod).